A 239-amino-acid polypeptide reads, in one-letter code: Tubulin beta-3 chain (239 aa).

Position 22 (N22) interacts with GTP. The segment at 207 to 239 (EESNMNDLVSEYQQYQDASAEPXXEQEEDYEEA) is disordered. A compositionally biased stretch (acidic residues) spans 230–239 (XEQEEDYEEA).

Belongs to the tubulin family. Dimer of alpha and beta chains. A typical microtubule is a hollow water-filled tube with an outer diameter of 25 nm and an inner diameter of 15 nM. Alpha-beta heterodimers associate head-to-tail to form protofilaments running lengthwise along the microtubule wall with the beta-tubulin subunit facing the microtubule plus end conferring a structural polarity. Microtubules usually have 13 protofilaments but different protofilament numbers can be found in some organisms and specialized cells. Requires Mg(2+) as cofactor.

The protein localises to the cytoplasm. The protein resides in the cytoskeleton. Its function is as follows. Tubulin is the major constituent of microtubules, a cylinder consisting of laterally associated linear protofilaments composed of alpha- and beta-tubulin heterodimers. Microtubules grow by the addition of GTP-tubulin dimers to the microtubule end, where a stabilizing cap forms. Below the cap, tubulin dimers are in GDP-bound state, owing to GTPase activity of alpha-tubulin. The protein is Tubulin beta-3 chain (TUBB3) of Anemia phyllitidis (Fern).